The primary structure comprises 151 residues: Phospholipase A2 inhibitor BjussuMIP (151 aa).

The N-terminal stretch at 1-4 (LANG) is a signal peptide. Residues 31 to 146 (LKYAFLTVHK…CDENLLVVCE (116 aa)) form the C-type lectin domain. 2 cysteine pairs are disulfide-bonded: Cys68-Cys145 and Cys123-Cys137. Asn107 carries N-linked (GlcNAc...) asparagine glycosylation.

Belongs to the alpha-type phospholipase A2 inhibitor family. As to quaternary structure, oligomer. As to expression, expressed by the liver.

The protein resides in the secreted. Its function is as follows. Inhibits enzymatic, anticoagulant, edema formation, myotoxicity activities induced by snakes phospholipase A2. Is oligomeric, but it is probable that each of its subunits can bind and inactive a PLA2 molecule. In Bothrops jararacussu (Jararacussu), this protein is Phospholipase A2 inhibitor BjussuMIP.